Reading from the N-terminus, the 210-residue chain is Putative 3-methyladenine DNA glycosylase (210 aa).

It belongs to the DNA glycosylase MPG family.

The chain is Putative 3-methyladenine DNA glycosylase from Corynebacterium glutamicum (strain R).